Reading from the N-terminus, the 340-residue chain is Ketol-acid reductoisomerase (NADP(+)) (340 aa).

Positions 3-182 constitute a KARI N-terminal Rossmann domain; sequence VQMEYEKDVK…GAARVGLLET (180 aa). Residues 26-29, arginine 49, serine 53, and 83-86 contribute to the NADP(+) site; these read YGSQ and DEIQ. The active site involves histidine 108. Glycine 134 contacts NADP(+). One can recognise a KARI C-terminal knotted domain in the interval 183–328; that stretch reads TYKEETEEDL…AELRKAMPFV (146 aa). The Mg(2+) site is built by aspartate 191, glutamate 195, glutamate 227, and glutamate 231. Serine 252 serves as a coordination point for substrate.

It belongs to the ketol-acid reductoisomerase family. Mg(2+) is required as a cofactor.

The catalysed reaction is (2R)-2,3-dihydroxy-3-methylbutanoate + NADP(+) = (2S)-2-acetolactate + NADPH + H(+). It carries out the reaction (2R,3R)-2,3-dihydroxy-3-methylpentanoate + NADP(+) = (S)-2-ethyl-2-hydroxy-3-oxobutanoate + NADPH + H(+). The protein operates within amino-acid biosynthesis; L-isoleucine biosynthesis; L-isoleucine from 2-oxobutanoate: step 2/4. It participates in amino-acid biosynthesis; L-valine biosynthesis; L-valine from pyruvate: step 2/4. Involved in the biosynthesis of branched-chain amino acids (BCAA). Catalyzes an alkyl-migration followed by a ketol-acid reduction of (S)-2-acetolactate (S2AL) to yield (R)-2,3-dihydroxy-isovalerate. In the isomerase reaction, S2AL is rearranged via a Mg-dependent methyl migration to produce 3-hydroxy-3-methyl-2-ketobutyrate (HMKB). In the reductase reaction, this 2-ketoacid undergoes a metal-dependent reduction by NADPH to yield (R)-2,3-dihydroxy-isovalerate. This chain is Ketol-acid reductoisomerase (NADP(+)), found in Streptococcus gordonii (strain Challis / ATCC 35105 / BCRC 15272 / CH1 / DL1 / V288).